Reading from the N-terminus, the 75-residue chain is Conotoxin Vc6.15 (75 aa).

Positions 1–19 (MEKLTILLHVAAVLMSTQA) are cleaved as a signal peptide. The propeptide occupies 20-41 (LIQEQRQKAKINLFSKRKPSAE). 3 disulfides stabilise this stretch: Cys-49–Cys-62, Cys-55–Cys-66, and Cys-61–Cys-71.

This sequence belongs to the conotoxin O2 superfamily. In terms of tissue distribution, expressed by the venom duct.

It is found in the secreted. Inhibits voltage-gated ion channels. The chain is Conotoxin Vc6.15 from Conus victoriae (Queen Victoria cone).